A 598-amino-acid chain; its full sequence is Urease subunit alpha (598 aa).

In terms of domain architecture, Urease spans 136–598 (GGLDTHVHWL…APLAQRYFLF (463 aa)). Residues H141, H143, and K223 each coordinate Ni(2+). K223 is modified (N6-carboxylysine). H225 provides a ligand contact to substrate. The Ni(2+) site is built by H252 and H278. Residue H326 is the Proton donor of the active site. D366 contacts Ni(2+).

It belongs to the metallo-dependent hydrolases superfamily. Urease alpha subunit family. In terms of assembly, heterotrimer of UreA (gamma), UreB (beta) and UreC (alpha) subunits. Three heterotrimers associate to form the active enzyme. Ni cation serves as cofactor. Carboxylation allows a single lysine to coordinate two nickel ions.

Its subcellular location is the cytoplasm. The enzyme catalyses urea + 2 H2O + H(+) = hydrogencarbonate + 2 NH4(+). It functions in the pathway nitrogen metabolism; urea degradation; CO(2) and NH(3) from urea (urease route): step 1/1. This chain is Urease subunit alpha, found in Ureaplasma urealyticum serovar 10 (strain ATCC 33699 / Western).